Here is a 149-residue protein sequence, read N- to C-terminus: uncharacterized protein (149 aa).

Serine 21 carries the phosphoserine modification. Transmembrane regions (helical) follow at residues 48-68 (FMEFAVGSIVYSFGVPGWVLG) and 72-92 (VLAAGFLVMFLFLVWPCFQLV). The segment at 116 to 149 (AEEVPPPSYPSLEEENEGNEEIEESEEMNTLLSK) is disordered. The segment covering 127–142 (LEEENEGNEEIEESEE) has biased composition (acidic residues).

The protein resides in the membrane. This is an uncharacterized protein from Schizosaccharomyces pombe (strain 972 / ATCC 24843) (Fission yeast).